The chain runs to 1958 residues: Callose synthase 7 (1958 aa).

The disordered stretch occupies residues 1–29 (MASTSSGGRGEDGRPPQMQPVRSMSRKMT). Over 1-504 (MASTSSGGRG…LYRSFDRMWM (504 aa)) the chain is Cytoplasmic. A helical transmembrane segment spans residues 505-525 (FLVLSLQTMIIVAWHPSGSIL). Topologically, residues 526–535 (AIFTEDVFRN) are extracellular. A helical membrane pass occupies residues 536–556 (VLTIFITSAFLNLLQATLDLV). The Cytoplasmic portion of the chain corresponds to 557–569 (LSFGAWKSLKFSQ). A helical transmembrane segment spans residues 570–590 (IMRYITKFLMAAMWAIMLPIT). At 591 to 620 (YSKSVQNPTGLIKFFSSWVGSWLHRSLYDY) the chain is on the extracellular side. A helical transmembrane segment spans residues 621–641 (AIALYVLPNILAAVFFLLPPL). Residues 642–673 (RRIMERSNMRIVTLIMWWAQPKLYIGRGMHEE) lie on the Cytoplasmic side of the membrane. Residues 674–694 (MFALFKYTFFWVMLLLSKLAF) traverse the membrane as a helical segment. Residues 695–730 (SYYVEILPLVNPTKLIWDMHVVNYEWHEFFPNATHN) lie on the Extracellular side of the membrane. Residues 731 to 751 (IGVIIAIWGPIVLVYFMDTQI) traverse the membrane as a helical segment. Residues 752 to 1496 (WYAIFSTLFG…FDFYRMLSFY (745 aa)) lie on the Cytoplasmic side of the membrane. A helical membrane pass occupies residues 1497-1517 (FTTVGFYFSSMITVLTVYVFL). Residues 1518–1547 (YGRLYLVLSGLEKNILQSASVHESNALEQA) lie on the Extracellular side of the membrane. The chain crosses the membrane as a helical span at residues 1548–1568 (LAAQSVFQLGFLMVLPMVMEI). Residues 1569-1576 (GLEKGFRT) are Cytoplasmic-facing. A helical membrane pass occupies residues 1577-1597 (ALGDFIIMQLQLASVFFTFQL). Residues 1598-1640 (GTKAHYFGRTILHGGSKYRATGRGFVVFHAKFAENYRLYSRSH) are Extracellular-facing. A helical transmembrane segment spans residues 1641-1661 (FVKGLELVILLVVYQVYGTSY). Residues 1662–1667 (RSSSTY) are Cytoplasmic-facing. A helical membrane pass occupies residues 1668–1688 (MYITFSMWFLVTSWLFAPFIF). Residues 1689-1742 (NPSGFEWQKTVDDWTDWKRWMGNRGGIGIVLDKSWESWWDIEQEHLKHTNLRGR) are Extracellular-facing. Residues 1743–1763 (VLEILLALRFLLYQYGIVYHL) form a helical membrane-spanning segment. The Cytoplasmic segment spans residues 1764-1771 (NIARRHTT). Residues 1772–1792 (FLVYGLSWAILLSVLLVLKMV) traverse the membrane as a helical segment. The Extracellular portion of the chain corresponds to 1793–1812 (SMGRRKFGTDFQVMFRILKA). The chain crosses the membrane as a helical span at residues 1813–1833 (LLFLGFLSVMTVLFVVCGLTI). The Cytoplasmic portion of the chain corresponds to 1834-1835 (SD). The chain crosses the membrane as a helical span at residues 1836-1856 (LFASILAFLPTGWAILLIGQA). The Extracellular segment spans residues 1857-1878 (LRSVFKGLGFWDSVKELGRAYE). Residues 1879 to 1899 (YIMGLVIFTPIAVLSWFPFVS) form a helical membrane-spanning segment. The Cytoplasmic segment spans residues 1900–1958 (EFQTRLLFNQAFSRGLQISMILAGKKDKETPSTKYLGHTEESFGLEHDTNTFNHYYLWT).

It belongs to the glycosyltransferase 48 family.

The protein localises to the cell membrane. The catalysed reaction is [(1-&gt;3)-beta-D-glucosyl](n) + UDP-alpha-D-glucose = [(1-&gt;3)-beta-D-glucosyl](n+1) + UDP + H(+). Involved in callose synthesis at the forming cell plate during cytokinesis. During plant growth and development, callose is found as a transitory component of the cell plate in dividing cells, is a major component of pollen mother cell walls and pollen tubes, and is found as a structural component of plasmodesmatal canals. This Arabidopsis thaliana (Mouse-ear cress) protein is Callose synthase 7 (CALS7).